We begin with the raw amino-acid sequence, 108 residues long: Cytochrome c (108 aa).

Residues cysteine 19, cysteine 22, histidine 23, and methionine 85 each coordinate heme c.

This sequence belongs to the cytochrome c family. In terms of processing, binds 1 heme c group covalently per subunit.

The protein resides in the mitochondrion intermembrane space. Its function is as follows. Electron carrier protein. The oxidized form of the cytochrome c heme group can accept an electron from the heme group of the cytochrome c1 subunit of cytochrome reductase. Cytochrome c then transfers this electron to the cytochrome oxidase complex, the final protein carrier in the mitochondrial electron-transport chain. In Cochliobolus lunatus (Filamentous fungus), this protein is Cytochrome c.